The primary structure comprises 245 residues: GATA zinc finger domain-containing protein 1 (245 aa).

The GATA-type zinc-finger motif lies at 9 to 33; the sequence is CSMCKTNTSSMWKKGSQGEILCNNC. Residues 39-70 show a composition bias toward low complexity; that stretch reads TAAGGNNNNNSSSSTSGSSSYTGTTFASTSTS. The segment at 39–110 is disordered; sequence TAAGGNNNNN…PAAEKKVSTK (72 aa). Polar residues predominate over residues 71–80; that stretch reads QQSNGGNTKQ.

Its subcellular location is the nucleus. Component of some chromatin complex recruited to chromatin sites methylated 'Lys-4' of histone H3 (H3K4me), with a preference for trimethylated form (H3K4me3). The polypeptide is GATA zinc finger domain-containing protein 1 (gatad1) (Xenopus laevis (African clawed frog)).